A 124-amino-acid polypeptide reads, in one-letter code: uncharacterized protein (124 aa).

2 disordered regions span residues 1 to 31 (MAQH…TMKP) and 59 to 124 (EDAR…YPQP). Polar residues-rich tracts occupy residues 65–86 (GMSS…SDAA) and 98–124 (TGEQ…YPQP).

This is an uncharacterized protein from Bos taurus (Bovine).